A 34-amino-acid polypeptide reads, in one-letter code: Photosystem II reaction center protein Psb30 (34 aa).

The helical transmembrane segment at 6–26 (VIGQLVSTGAIMLLGPAIIIL) threads the bilayer.

This sequence belongs to the Psb30/Ycf12 family. As to quaternary structure, PSII is composed of 1 copy each of membrane proteins PsbA, PsbB, PsbC, PsbD, PsbE, PsbF, PsbH, PsbI, PsbJ, PsbK, PsbL, PsbM, PsbT, PsbX, PsbY, PsbZ, Psb30/Ycf12, peripheral proteins of the oxygen-evolving complex and a large number of cofactors. It forms dimeric complexes.

It is found in the plastid. Its subcellular location is the chloroplast thylakoid membrane. Its function is as follows. A core subunit of photosystem II (PSII), probably helps stabilize the reaction center. This Thalassiosira pseudonana (Marine diatom) protein is Photosystem II reaction center protein Psb30.